The primary structure comprises 218 residues: MTTTVKRRARIGIMGGTFDPIHNGHLVAGSEVADRFDLDLVVYVPTGQPWQKANKKVSPAEDRYLMTVIATASNPRFMVSRVDIDRGGDTYTIDTLQDLSKQYPDAQLYFITGADALAQIVTWRDWEKTFELAHFVGVTRPGYELDGNIIPEMHQDRVSLVDIPAMAISSTDCRERSSEERPVWYLVPDGVVQYIAKRQLYRPEGSDKDMDPKGQNQA.

This sequence belongs to the NadD family.

The enzyme catalyses nicotinate beta-D-ribonucleotide + ATP + H(+) = deamido-NAD(+) + diphosphate. It functions in the pathway cofactor biosynthesis; NAD(+) biosynthesis; deamido-NAD(+) from nicotinate D-ribonucleotide: step 1/1. In terms of biological role, catalyzes the reversible adenylation of nicotinate mononucleotide (NaMN) to nicotinic acid adenine dinucleotide (NaAD). This Corynebacterium glutamicum (strain ATCC 13032 / DSM 20300 / JCM 1318 / BCRC 11384 / CCUG 27702 / LMG 3730 / NBRC 12168 / NCIMB 10025 / NRRL B-2784 / 534) protein is Probable nicotinate-nucleotide adenylyltransferase.